The sequence spans 50 residues: METTNFGFVASLLFVGVPTIFLIGLFLSTQEGEKSSFYSDSGKGKLDPKR.

Residues 6-26 (FGFVASLLFVGVPTIFLIGLF) form a helical membrane-spanning segment.

It belongs to the PsbM family. As to quaternary structure, PSII is composed of 1 copy each of membrane proteins PsbA, PsbB, PsbC, PsbD, PsbE, PsbF, PsbH, PsbI, PsbJ, PsbK, PsbL, PsbM, PsbT, PsbX, PsbY, Psb30/Ycf12, peripheral proteins PsbO, CyanoQ (PsbQ), PsbU, PsbV and a large number of cofactors. It forms dimeric complexes.

The protein localises to the cellular thylakoid membrane. Its function is as follows. One of the components of the core complex of photosystem II (PSII). PSII is a light-driven water:plastoquinone oxidoreductase that uses light energy to abstract electrons from H(2)O, generating O(2) and a proton gradient subsequently used for ATP formation. It consists of a core antenna complex that captures photons, and an electron transfer chain that converts photonic excitation into a charge separation. This subunit is found at the monomer-monomer interface. The chain is Photosystem II reaction center protein M from Prochlorococcus marinus (strain MIT 9215).